Reading from the N-terminus, the 312-residue chain is Regulation of nuclear pre-mRNA domain-containing protein 1A (312 aa).

Residue serine 2 is modified to N-acetylserine. Residues 2–133 (SAFSEAALEK…QLKHALYGDK (132 aa)) enclose the CID domain. Phosphoserine occurs at positions 153, 156, and 285. Residues 244–286 (LADFLRCQKEALAEKEHKLEEYKRKLARVSLVRKELRARIQSL) adopt a coiled-coil conformation.

This sequence belongs to the UPF0400 (RTT103) family. In terms of assembly, may form a heterodimer with RPRD1B. Associates with the RNA polymerase II subunit POLR2A (via CTD phosphorylated at 'Ser-2' and 'Ser-7' of the heptad repeats).

It is found in the nucleus. In terms of biological role, interacts with phosphorylated C-terminal heptapeptide repeat domain (CTD) of the largest RNA polymerase II subunit POLR2A, and participates in dephosphorylation of the CTD by RPAP2. May act as a negative regulator of cyclin-D1 (CCND1) and cyclin-E (CCNE1) in the cell cycle. The chain is Regulation of nuclear pre-mRNA domain-containing protein 1A (Rprd1a) from Mus musculus (Mouse).